Consider the following 2004-residue polypeptide: Alpha-2-macroglobulin homolog (2004 aa).

The signal sequence occupies residues 1-27; it reads MLCCLVFKGLLSMDLLRFLLISPFALI.

It belongs to the protease inhibitor I39 (alpha-2-macroglobulin) family. Bacterial alpha-2-macroglobulin subfamily.

In Yersinia pestis, this protein is Alpha-2-macroglobulin homolog.